The following is a 713-amino-acid chain: Vacuolar amino acid transporter 4 (713 aa).

The interval Met-1–Gln-33 is disordered. Residues Met-1–Asn-242 are Vacuolar-facing. The segment covering His-21 to Gln-33 has biased composition (polar residues). At Ser-88 the chain carries Phosphoserine. The tract at residues Arg-99–Ser-121 is disordered. Ser-130 and Ser-165 each carry phosphoserine. Residues Lys-200–Ile-233 form a disordered region. The span at Ser-221 to Gln-231 shows a compositional bias: low complexity. The helical transmembrane segment at Phe-243–Ile-263 threads the bilayer. The Cytoplasmic segment spans residues Pro-264–Lys-301. The helical transmembrane segment at Val-302–Phe-322 threads the bilayer. Residues His-323 to Gly-326 lie on the Vacuolar side of the membrane. Residues Leu-327–Ile-347 form a helical membrane-spanning segment. Topologically, residues Leu-348–Arg-373 are cytoplasmic. The chain crosses the membrane as a helical span at residues Ile-374–Phe-394. Topologically, residues Thr-395–Gly-410 are vacuolar. Residues Val-411–Ile-431 form a helical membrane-spanning segment. Residues Arg-432 to Ser-438 lie on the Cytoplasmic side of the membrane. A helical membrane pass occupies residues Leu-439 to Thr-459. Over Ala-460–Arg-483 the chain is Vacuolar. Residues Trp-484–Val-504 form a helical membrane-spanning segment. Residues Gln-505–Pro-515 lie on the Cytoplasmic side of the membrane. A helical transmembrane segment spans residues Leu-516–Gly-536. The Vacuolar portion of the chain corresponds to Tyr-537–Leu-561. The helical transmembrane segment at Ile-562–Ile-582 threads the bilayer. Residues Lys-583–Lys-621 are Cytoplasmic-facing. Residues Trp-622–Gly-642 traverse the membrane as a helical segment. Residues Ser-643–Lys-648 lie on the Vacuolar side of the membrane. A helical transmembrane segment spans residues Phe-649–Leu-669. Over His-670–Thr-692 the chain is Cytoplasmic. A helical membrane pass occupies residues Ile-693–Phe-711. The Vacuolar portion of the chain corresponds to Gly-712–Val-713.

Belongs to the amino acid/polyamine transporter 2 family.

It is found in the vacuole membrane. Its function is as follows. Involved in amino acid efflux from the vacuole to the cytoplasm. Capable of transporting large neutral amino acids including tyrosine, glutamine, asparagine, isoleucine and leucine. The sequence is that of Vacuolar amino acid transporter 4 (AVT4) from Saccharomyces cerevisiae (strain ATCC 204508 / S288c) (Baker's yeast).